The primary structure comprises 433 residues: Enolase (433 aa).

Gln167 is a binding site for (2R)-2-phosphoglycerate. The active-site Proton donor is Glu209. Residue Asp246 coordinates Mg(2+). The Plasminogen-binding motif signature appears at 252 to 260; the sequence is FYDAEKKEY. Residues Glu291 and Asp318 each contribute to the Mg(2+) site. Lys343, Arg372, Ser373, and Lys394 together coordinate (2R)-2-phosphoglycerate. The active-site Proton acceptor is the Lys343.

It belongs to the enolase family. In terms of assembly, component of the RNA degradosome, a multiprotein complex involved in RNA processing and mRNA degradation. The cofactor is Mg(2+).

The protein localises to the cell inner membrane. It is found in the cell outer membrane. Its subcellular location is the cytoplasm. It localises to the secreted. The protein resides in the cell surface. The catalysed reaction is (2R)-2-phosphoglycerate = phosphoenolpyruvate + H2O. Its pathway is carbohydrate degradation; glycolysis; pyruvate from D-glyceraldehyde 3-phosphate: step 4/5. In terms of biological role, catalyzes the reversible conversion of 2-phosphoglycerate (2-PG) into phosphoenolpyruvate (PEP). It is essential for the degradation of carbohydrates via glycolysis. Functionally, 'Moonlights' as a plasminogen receptor and plasmin activator. Binds host (human) plasminogen in vitro. Binds human plasmin and plasminogen on the cell surface; enhances the activity of host tissue-specific plasminogen activator (tPA). Plasmin bound to bacteria is partially protected from its physiological inhibitor alpha-2AP (SERPINF2). In Aeromonas hydrophila, this protein is Enolase.